A 367-amino-acid chain; its full sequence is tRNA/tmRNA (uracil-C(5))-methyltransferase (367 aa).

The S-adenosyl-L-methionine site is built by Gln191, Tyr218, Asn223, Glu239, and Asp299. The active-site Nucleophile is the Cys324. Glu358 functions as the Proton acceptor in the catalytic mechanism.

The protein belongs to the class I-like SAM-binding methyltransferase superfamily. RNA M5U methyltransferase family. TrmA subfamily.

It carries out the reaction uridine(54) in tRNA + S-adenosyl-L-methionine = 5-methyluridine(54) in tRNA + S-adenosyl-L-homocysteine + H(+). The catalysed reaction is uridine(341) in tmRNA + S-adenosyl-L-methionine = 5-methyluridine(341) in tmRNA + S-adenosyl-L-homocysteine + H(+). Functionally, dual-specificity methyltransferase that catalyzes the formation of 5-methyluridine at position 54 (m5U54) in all tRNAs, and that of position 341 (m5U341) in tmRNA (transfer-mRNA). In Campylobacter concisus (strain 13826), this protein is tRNA/tmRNA (uracil-C(5))-methyltransferase.